The primary structure comprises 160 residues: Cytochrome b6-f complex subunit 4 (160 aa).

3 consecutive transmembrane segments (helical) span residues 36-56, 95-115, and 127-147; these read LLYI…GLSV, LLGV…PFIE, and PVAM…GIGA.

The protein belongs to the cytochrome b family. PetD subfamily. In terms of assembly, the 4 large subunits of the cytochrome b6-f complex are cytochrome b6, subunit IV (17 kDa polypeptide, petD), cytochrome f and the Rieske protein, while the 4 small subunits are petG, petL, petM and petN. The complex functions as a dimer.

The protein resides in the plastid. It localises to the chloroplast thylakoid membrane. Its function is as follows. Component of the cytochrome b6-f complex, which mediates electron transfer between photosystem II (PSII) and photosystem I (PSI), cyclic electron flow around PSI, and state transitions. The chain is Cytochrome b6-f complex subunit 4 from Guillardia theta (Cryptophyte).